A 106-amino-acid chain; its full sequence is Phosphoribosyl-ATP pyrophosphatase 1 (106 aa).

This sequence belongs to the PRA-PH family.

Its subcellular location is the cytoplasm. It carries out the reaction 1-(5-phospho-beta-D-ribosyl)-ATP + H2O = 1-(5-phospho-beta-D-ribosyl)-5'-AMP + diphosphate + H(+). It participates in amino-acid biosynthesis; L-histidine biosynthesis; L-histidine from 5-phospho-alpha-D-ribose 1-diphosphate: step 2/9. The chain is Phosphoribosyl-ATP pyrophosphatase 1 (hisE1) from Bradyrhizobium diazoefficiens (strain JCM 10833 / BCRC 13528 / IAM 13628 / NBRC 14792 / USDA 110).